The sequence spans 352 residues: MTELELLGPRASGDALGTAVLKAVAEDFQVDEVLDIPLSGQGEHLWLWVEKRDLNTEEAARRLARAAGVPARSISYAGLKDRQALTRQWFSLHLPGKADPDLSRAEDETLRVLKQVRHQRKLQRGAHSANGFTLRLTGLQADHPALDARLEQLKQQGVPNYFGAQRFGHAGGNVHDALDWATRQALPEQRNVRSRLLSAARSYLFNQVLAARVADGSWQHAQVGDLLAFTDSRSFFAAGEAECSDPRLAILDLHPTGPLWGEGPAPGGGTPQALETEVGARHPQLCQWLARAGMDHERRILRLPIGRLTWHYPEPDILQLEFVLPAGCFATVVVRELVDLVPAGQTDSPCVF.

D81 functions as the Nucleophile in the catalytic mechanism. A TRUD domain is found at 157–303; it reads GVPNYFGAQR…MDHERRILRL (147 aa).

This sequence belongs to the pseudouridine synthase TruD family.

The enzyme catalyses uridine(13) in tRNA = pseudouridine(13) in tRNA. In terms of biological role, responsible for synthesis of pseudouridine from uracil-13 in transfer RNAs. This Pseudomonas entomophila (strain L48) protein is tRNA pseudouridine synthase D.